A 24-amino-acid chain; its full sequence is Fibrinogen gamma chain (24 aa).

Heterohexamer; disulfide linked. Contains 2 sets of 3 non-identical chains (alpha, beta and gamma). The 2 heterotrimers are in head to head conformation with the N-termini in a small central domain. In terms of processing, conversion of fibrinogen to fibrin is triggered by thrombin, which cleaves fibrinopeptides A and B from alpha and beta chains, and thus exposes the N-terminal polymerization sites responsible for the formation of the soft clot. The soft clot is converted into the hard clot by factor XIIIA which catalyzes the epsilon-(gamma-glutamyl)lysine cross-linking between gamma chains (stronger) and between alpha chains (weaker) of different monomers.

Its subcellular location is the secreted. Together with fibrinogen alpha (FGA) and fibrinogen beta (FGB), polymerizes to form an insoluble fibrin matrix. Has a major function in hemostasis as one of the primary components of blood clots. In addition, functions during the early stages of wound repair to stabilize the lesion and guide cell migration during re-epithelialization. Was originally thought to be essential for platelet aggregation, based on in vitro studies using anticoagulated blood. However, subsequent studies have shown that it is not absolutely required for thrombus formation in vivo. Enhances expression of SELP in activated platelets via an ITGB3-dependent pathway. Maternal fibrinogen is essential for successful pregnancy. Fibrin deposition is also associated with infection, where it protects against IFNG-mediated hemorrhage. May also facilitate the antibacterial immune response via both innate and T-cell mediated pathways. This chain is Fibrinogen gamma chain (FGG), found in Canis lupus familiaris (Dog).